A 145-amino-acid chain; its full sequence is Large ribosomal subunit protein bL19 (145 aa).

This sequence belongs to the bacterial ribosomal protein bL19 family.

In terms of biological role, this protein is located at the 30S-50S ribosomal subunit interface and may play a role in the structure and function of the aminoacyl-tRNA binding site. The polypeptide is Large ribosomal subunit protein bL19 (Brucella anthropi (strain ATCC 49188 / DSM 6882 / CCUG 24695 / JCM 21032 / LMG 3331 / NBRC 15819 / NCTC 12168 / Alc 37) (Ochrobactrum anthropi)).